A 513-amino-acid polypeptide reads, in one-letter code: Zinc finger CCCH-type with G patch domain-containing protein (513 aa).

A C3H1-type zinc finger spans residues 155–178; that stretch reads PCSYYLEGECRFDETKCRFSHGAL. Acidic residues predominate over residues 252–261; the sequence is DQEEDDELSS. The segment at 252-282 is disordered; that stretch reads DQEEDDELSSEESNSSMNNESSDEAESDMDD. The span at 262-271 shows a compositional bias: low complexity; it reads EESNSSMNNE. The segment covering 272–282 has biased composition (acidic residues); it reads SSDEAESDMDD. Positions 312–358 constitute a G-patch domain; sequence TRGIGSKLMEKMGYIHGTGLGSDGRGIVTPVSAQILPQGRSLDACME. Over residues 478–495 the composition is skewed to polar residues; the sequence is VQMQSHKQELATLQAQER. A disordered region spans residues 478 to 513; that stretch reads VQMQSHKQELATLQAQERSLSKEQQTRKSKNKMFEF. Residues 496–513 show a composition bias toward basic and acidic residues; that stretch reads SLSKEQQTRKSKNKMFEF.

Its subcellular location is the nucleus. In terms of biological role, transcription repressor. This Drosophila erecta (Fruit fly) protein is Zinc finger CCCH-type with G patch domain-containing protein.